The chain runs to 117 residues: Class I hydrophobin 2 (117 aa).

A signal peptide spans 1–21 (EIVSLSLSLLAVVPLVVLVIA). Cystine bridges form between Cys-35–Cys-96, Cys-42–Cys-90, Cys-43–Cys-76, and Cys-97–Cys-110.

The protein belongs to the fungal hydrophobin family. Self-assembles to form functional amyloid fibrils called rodlets. Self-assembly into fibrillar rodlets occurs spontaneously at hydrophobic:hydrophilic interfaces and the rodlets further associate laterally to form amphipathic monolayers.

It localises to the secreted. It is found in the cell wall. Its function is as follows. Aerial growth, conidiation, and dispersal of filamentous fungi in the environment rely upon a capability of their secreting small amphipathic proteins called hydrophobins (HPBs) with low sequence identity. Class I can self-assemble into an outermost layer of rodlet bundles on aerial cell surfaces, conferring cellular hydrophobicity that supports fungal growth, development and dispersal; whereas Class II form highly ordered films at water-air interfaces through intermolecular interactions but contribute nothing to the rodlet structure. The chain is Class I hydrophobin 2 from Pisolithus tinctorius (Dead man's foot).